The following is a 268-amino-acid chain: UPF0719 transmembrane protein aq_1349 (268 aa).

The next 8 membrane-spanning stretches (helical) occupy residues 5–24 (LIALFWVIFSKYVFDVLFFR), 37–59 (NLALSLSYAGYFLGLAFSFYSVY), 69–91 (LYLIFVSFTLLLGVYIFDLIFLR), 104–126 (AGAGITQGIYFLSLGILISASFW), 130–152 (SFILSVIYSLIYLSLGMVMLFIS), 173–195 (FSASLVLGSITLGVSVVLYGAIS), 210–232 (VLYFVVSQVLMVIFYVVVEFLLF), and 245–267 (NLSASLILSATFIASAFITLAVM).

Belongs to the UPF0719 family.

It localises to the cell membrane. This is UPF0719 transmembrane protein aq_1349 from Aquifex aeolicus (strain VF5).